The sequence spans 91 residues: UPF0512 protein F (91 aa).

It belongs to the UPF0512 family.

This chain is UPF0512 protein F, found in Dictyostelium discoideum (Social amoeba).